Reading from the N-terminus, the 267-residue chain is Probable ribosomal RNA small subunit methyltransferase A (267 aa).

Residues L12, G37, E58, D83, and N100 each coordinate S-adenosyl-L-methionine.

The protein belongs to the class I-like SAM-binding methyltransferase superfamily. rRNA adenine N(6)-methyltransferase family. RsmA subfamily.

Its subcellular location is the cytoplasm. In terms of biological role, specifically dimethylates two adjacent adenosines in the loop of a conserved hairpin near the 3'-end of 16S rRNA in the 30S particle. May play a critical role in biogenesis of 30S subunits. This chain is Probable ribosomal RNA small subunit methyltransferase A, found in Methanococcus vannielii (strain ATCC 35089 / DSM 1224 / JCM 13029 / OCM 148 / SB).